The chain runs to 396 residues: Interactor of constitutive active ROPs 5 (396 aa).

2 disordered regions span residues 1–49 (MQTP…TQIP) and 99–122 (ALKREAQEEAEDAKHQLMDINASE). Coiled coils occupy residues 67–124 (KKRT…SEDS) and 158–366 (LSSA…TAAS). Positions 99–115 (ALKREAQEEAEDAKHQL) are enriched in basic and acidic residues.

It belongs to the ICR family. Component of the active ARAC10-IRC5-KIN13A complex. Homooligomer. Interacts (via C-terminus) with ARAC4, ARAC10, ARAC11 and (via N-terminus) with KIN13A (via C-terminus), but no interactions with SEC3A. Expressed in xylem cells in the roots and in stamens, petals and pollen.

Its subcellular location is the cell membrane. The protein localises to the cytoplasm. The protein resides in the cytoskeleton. Functionally, ROP effector binding specifically activated ROPs and linking them to the microtubule cytoskeleton. Involved in ROP-regulated polar growth. Involved in local disassembly of cortical microtubules when associated with ARAC10 and KIN13A and conversely also mediates the elimination of ARAC10 from the plasma membrane by the cortical microtubules. Accumulates at the plus end of shrinking microtubules. Targets KIN13A to microtubules. The chain is Interactor of constitutive active ROPs 5 (ICR5) from Arabidopsis thaliana (Mouse-ear cress).